A 2153-amino-acid polypeptide reads, in one-letter code: Genome polyprotein (2153 aa).

The N-myristoyl glycine; by host moiety is linked to residue Gly-2. Positions 213–240 (HTHPGQSGHQIRGPSQSNDRSGGKPDED) are disordered. A compositionally biased stretch (polar residues) spans 216–232 (PGQSGHQIRGPSQSNDR). Residues 565–584 (ELQNNDDPVENFVESTLKEV) form an amphipathic alpha-helix region. Catalysis depends on for protease 2A activity residues His-864 and Asp-880. 2 residues coordinate Zn(2+): Cys-897 and Cys-899. Cys-951 functions as the For protease 2A activity in the catalytic mechanism. The Zn(2+) site is built by Cys-957 and His-959. The tract at residues 1088–1158 (SDSWLRKFTE…GFSSASSEAQ (71 aa)) is membrane-binding. The segment at 1088-1224 (SDSWLRKFTE…NPGCGKSLVT (137 aa)) is oligomerization. The interval 1109–1113 (SIKIG) is RNA-binding. The 160-residue stretch at 1187 to 1346 (TKIQKDLKQL…FRNTTGLLDV (160 aa)) folds into the SF3 helicase domain. ATP is bound at residue 1214–1221 (GNPGCGKS). Residues Cys-1353, Cys-1365, and Cys-1370 each contribute to the Zn(2+) site. A C4-type; degenerate zinc finger spans residues 1353–1370 (CTGCPKPAHYKTCCPLLC). The tract at residues 1397 to 1404 (ENATRKKV) is RNA-binding. The tract at residues 1408–1413 (LDAIFQ) is oligomerization. The stretch at 1460–1480 (VHYMLNCLGSLIIILGTVYAL) is an intramembrane region. Tyr-1491 is subject to O-(5'-phospho-RNA)-tyrosine. In terms of domain architecture, Peptidase C3 spans 1511 to 1689 (GPEHEFVRAL…YGAALLRKYF (179 aa)). Active-site for protease 3C activity residues include His-1550, Glu-1581, and Cys-1657. Positions 1920-2033 (GELLAFDYTN…SYPFELDPME (114 aa)) constitute a RdRp catalytic domain. The Mg(2+) site is built by Asp-1926 and Asp-2019.

Belongs to the picornaviruses polyprotein family. Interacts with capsid protein VP1 and capsid protein VP3 to form heterotrimeric protomers. In terms of assembly, interacts with capsid protein VP0, and capsid protein VP3 to form heterotrimeric protomers. Five protomers subsequently associate to form pentamers which serve as building blocks for the capsid. Interacts with capsid protein VP2, capsid protein VP3 and capsid protein VP4 following cleavage of capsid protein VP0. Interacts (via C-terminus) with capsid protein VP4 (via C-terminus). Interacts with host CDHR3 (via N-terminus); this interaction occurs near each threefold vertex of the capsid and allows the virus attachment and entry into the host cell. As to quaternary structure, interacts with capsid protein VP1 and capsid protein VP3 in the mature capsid. Interacts with host CDHR3 (via N-terminus); this interaction occurs near each threefold vertex of the capsid and allows the virus attachment and entry into the host cell. Interacts with capsid protein VP0 and capsid protein VP1 to form heterotrimeric protomers. Five protomers subsequently associate to form pentamers which serve as building blocks for the capsid. Interacts with capsid protein VP4 in the mature capsid. Interacts with protein 2C; this interaction may be important for virion morphogenesis. Interacts with host CDHR3 (via N-terminus); this interaction occurs near each threefold vertex of the capsid and allows the virus attachment and entry into the host cell. In terms of assembly, interacts (via C-terminus) with capsid protein VP1 (via C-terminus). Interacts with capsid protein VP3. As to quaternary structure, homodimer. Homohexamer; forms a hexameric ring structure with 6-fold symmetry characteristic of AAA+ ATPases. Interacts (via N-terminus) with host RTN3 (via reticulon domain); this interaction is important for viral replication. Interacts with capsid protein VP3; this interaction may be important for virion morphogenesis. In terms of assembly, interacts with protein 3CD. As to quaternary structure, homodimer. Interacts with host GBF1. Interacts (via GOLD domain) with host ACBD3 (via GOLD domain); this interaction allows the formation of a viral protein 3A/ACBD3 heterotetramer with a 2:2 stoichiometry, which will stimulate the recruitment of host PI4KB in order to synthesize PI4P at the viral RNA replication sites. Interacts with RNA-directed RNA polymerase. In terms of assembly, interacts with protein 3AB and with RNA-directed RNA polymerase. As to quaternary structure, interacts with Viral protein genome-linked and with protein 3CD. Mg(2+) is required as a cofactor. In terms of processing, specific enzymatic cleavages in vivo by the viral proteases yield processing intermediates and the mature proteins. Myristoylation is required for the formation of pentamers during virus assembly. Further assembly of 12 pentamers and a molecule of genomic RNA generates the provirion. Post-translationally, during virion maturation, immature virions are rendered infectious following cleavage of VP0 into VP4 and VP2. This maturation seems to be an autocatalytic event triggered by the presence of RNA in the capsid and it is followed by a conformational change infectious virion. In terms of processing, myristoylation is required during RNA encapsidation and formation of the mature virus particle. VPg is uridylylated by the polymerase into VPg-pUpU. This acts as a nucleotide-peptide primer for the genomic RNA replication.

It is found in the virion. The protein localises to the host cytoplasm. Its subcellular location is the host cytoplasmic vesicle membrane. It localises to the host nucleus. The enzyme catalyses a ribonucleoside 5'-triphosphate + H2O = a ribonucleoside 5'-diphosphate + phosphate + H(+). The catalysed reaction is Selective cleavage of Gln-|-Gly bond in the poliovirus polyprotein. In other picornavirus reactions Glu may be substituted for Gln, and Ser or Thr for Gly.. It carries out the reaction Selective cleavage of Tyr-|-Gly bond in the picornavirus polyprotein.. It catalyses the reaction RNA(n) + a ribonucleoside 5'-triphosphate = RNA(n+1) + diphosphate. Replication or transcription is subject to high level of random mutations by the nucleotide analog ribavirin. Functionally, forms an icosahedral capsid of pseudo T=3 symmetry with capsid proteins VP2 and VP3. The capsid is 300 Angstroms in diameter, composed of 60 copies of each capsid protein and enclosing the viral positive strand RNA genome. Capsid protein VP1 mainly forms the vertices of the capsid. The VP1 C-termini form 60 dominant spike-like protrusions on the surface of the virion. Capsid protein VP1 interacts with host cell receptor CDHR3 to provide virion attachment to target host cells. This attachment induces virion internalization. Tyrosine kinases are probably involved in the entry process. After binding to its receptor, the capsid undergoes conformational changes. Capsid protein VP1 N-terminus (that contains an amphipathic alpha-helix) and capsid protein VP4 are externalized. Together, they shape a pore in the host membrane through which viral genome is translocated to host cell cytoplasm. In terms of biological role, forms an icosahedral capsid of pseudo T=3 symmetry with capsid proteins VP2 and VP3. The capsid is 300 Angstroms in diameter, composed of 60 copies of each capsid protein and enclosing the viral positive strand RNA genome. Lies on the inner surface of the capsid shell. After binding to the host receptor, the capsid undergoes conformational changes. Capsid protein VP4 is released, Capsid protein VP1 N-terminus is externalized, and together, they shape a pore in the host membrane through which the viral genome is translocated into the host cell cytoplasm. Its function is as follows. Component of immature procapsids, which is cleaved into capsid proteins VP4 and VP2 after maturation. Allows the capsid to remain inactive before the maturation step. Functionally, cysteine protease that cleaves viral polyprotein and specific host proteins. It is responsible for the autocatalytic cleavage between the P1 and P2 regions, which is the first cleavage occurring in the polyprotein. Also cleaves the host translation initiation factor EIF4G1, in order to shut down the capped cellular mRNA translation. Inhibits the host nucleus-cytoplasm protein and RNA trafficking by cleaving host members of the nuclear pores. Counteracts stress granule formation probably by antagonizing its assembly or promoting its dissassembly. In terms of biological role, plays an essential role in the virus replication cycle by acting as a viroporin. Creates a pore in the host endoplasmic reticulum and as a consequence releases Ca2+ in the cytoplasm of infected cell. In turn, high levels of cytoplasmic calcium may trigger membrane trafficking and transport of viral ER-associated proteins to viroplasms, sites of viral genome replication. Induces and associates with structural rearrangements of intracellular membranes. Displays RNA-binding, nucleotide binding and NTPase activities. May play a role in virion morphogenesis and viral RNA encapsidation by interacting with the capsid protein VP3. Its function is as follows. Localizes the viral replication complex to the surface of membranous vesicles. Together with protein 3CD binds the Cis-Active RNA Element (CRE) which is involved in RNA synthesis initiation. Acts as a cofactor to stimulate the activity of 3D polymerase, maybe through a nucleid acid chaperone activity. Functionally, localizes the viral replication complex to the surface of membranous vesicles. It inhibits host cell endoplasmic reticulum-to-Golgi apparatus transport and causes the disassembly of the Golgi complex, possibly through GBF1 interaction. This would result in depletion of MHC, trail receptors and IFN receptors at the host cell surface. Plays an essential role in viral RNA replication by recruiting ACBD3 and PI4KB at the viral replication sites, thereby allowing the formation of the rearranged membranous structures where viral replication takes place. In terms of biological role, acts as a primer for viral RNA replication and remains covalently bound to viral genomic RNA. VPg is uridylylated prior to priming replication into VPg-pUpU. The oriI viral genomic sequence may act as a template for this. The VPg-pUpU is then used as primer on the genomic RNA poly(A) by the RNA-dependent RNA polymerase to replicate the viral genome. During genome replication, the VPg-RNA linkage is removed by the host TDP2, thereby accelerating replication. During the late stage of the replication cycle, host TDP2 is excluded from sites of viral RNA synthesis and encapsidation, allowing for the generation of progeny virions. Involved in the viral replication complex and viral polypeptide maturation. It exhibits protease activity with a specificity and catalytic efficiency that is different from protease 3C. Protein 3CD lacks polymerase activity. Protein 3CD binds to the 5'UTR of the viral genome. Its function is as follows. Major viral protease that mediates proteolytic processing of the polyprotein. Cleaves host EIF5B, contributing to host translation shutoff. Also cleaves host PABPC1, contributing to host translation shutoff. Functionally, replicates the viral genomic RNA on the surface of intracellular membranes. May form linear arrays of subunits that propagate along a strong head-to-tail interaction called interface-I. Covalently attaches UMP to a tyrosine of VPg, which is used to prime RNA synthesis. The positive stranded RNA genome is first replicated at virus induced membranous vesicles, creating a dsRNA genomic replication form. This dsRNA is then used as template to synthesize positive stranded RNA genomes. ss(+)RNA genomes are either translated, replicated or encapsidated. The chain is Genome polyprotein from Homo sapiens (Human).